Consider the following 685-residue polypeptide: Methionine--tRNA ligase (685 aa).

The 'HIGH' region signature appears at 12–22 (PYANGSIHLGH). Zn(2+) contacts are provided by cysteine 143, cysteine 146, cysteine 156, and cysteine 159. Positions 339-343 (KMSKS) match the 'KMSKS' region motif. Lysine 342 serves as a coordination point for ATP. The 104-residue stretch at 582–685 (DFMKIDMRVA…AGAQPGDKVG (104 aa)) folds into the tRNA-binding domain.

It belongs to the class-I aminoacyl-tRNA synthetase family. MetG type 1 subfamily. Homodimer. Zn(2+) serves as cofactor.

The protein localises to the cytoplasm. It carries out the reaction tRNA(Met) + L-methionine + ATP = L-methionyl-tRNA(Met) + AMP + diphosphate. In terms of biological role, is required not only for elongation of protein synthesis but also for the initiation of all mRNA translation through initiator tRNA(fMet) aminoacylation. The protein is Methionine--tRNA ligase of Neisseria meningitidis serogroup A / serotype 4A (strain DSM 15465 / Z2491).